The sequence spans 118 residues: Fluoride-specific ion channel FluC 2 (118 aa).

4 helical membrane passes run 1–21, 33–53, 55–75, and 93–113; these read MIEALLVATGGFFGAITRFAI, FPIATFLINITGAFLLGYIIG, GVTTGWQLLLGTGFMGAFTTF, and TFLLYLSATYIVGILFAFLGM. Na(+) contacts are provided by glycine 70 and threonine 73.

This sequence belongs to the fluoride channel Fluc/FEX (TC 1.A.43) family.

The protein localises to the cell membrane. The enzyme catalyses fluoride(in) = fluoride(out). Na(+) is not transported, but it plays an essential structural role and its presence is essential for fluoride channel function. Functionally, fluoride-specific ion channel. Important for reducing fluoride concentration in the cell, thus reducing its toxicity. The sequence is that of Fluoride-specific ion channel FluC 2 from Bacillus cereus (strain ZK / E33L).